Here is a 149-residue protein sequence, read N- to C-terminus: Thioredoxin-like protein 4B (149 aa).

The protein belongs to the DIM1 family. As to quaternary structure, homodimer. Interacts with the U5-102 kDa protein subunit of the spliceosome.

The protein resides in the nucleus. Essential role in pre-mRNA splicing. Required in cell cycle progression for S/G(2) transition. The protein is Thioredoxin-like protein 4B (TXNL4B) of Homo sapiens (Human).